Here is a 406-residue protein sequence, read N- to C-terminus: MKAVIFIMDGLGDRPNKDGNTPLKEAKTPVMDKMAKDGICGLMNAVDVGVRPGSDTAHLAILGYDPYTTYTGRGPFEACGVGVTVKPGDIAFRCNFSSVNENFIVTDRRAGRIEDTSELEKELDGLKIDDIDIIFKESGGYRAALVLRGPGLSDKISDADPKKEGKRVKEIHPLDNSKEAKKTAEIVNKLLKIAYEKLDKHPVNEERRKQNLPVANMIVPRGVGQVPEIMQFSEKTGLKGACIAGTGLIKGIAKMVGLDVIDVEGCDGTPNSDLMAKACAIVETLKDYDFILVNVKGADEAGHDGNYELKKEIIEKIDEMLDYITKNIDKDEVYIAMSGDHSTPIEEMDHSADPLPILIWGKSVRVDDVEKFDEFSTYKGGLNWIKGTNIMPILMDLMSIAKKYGA.

The protein belongs to the BPG-independent phosphoglycerate mutase family. A-PGAM subfamily.

The catalysed reaction is (2R)-2-phosphoglycerate = (2R)-3-phosphoglycerate. It participates in carbohydrate degradation; glycolysis; pyruvate from D-glyceraldehyde 3-phosphate: step 3/5. Catalyzes the interconversion of 2-phosphoglycerate and 3-phosphoglycerate. In Methanococcus maripaludis (strain C5 / ATCC BAA-1333), this protein is 2,3-bisphosphoglycerate-independent phosphoglycerate mutase.